The sequence spans 61 residues: Large ribosomal subunit protein uL30 (61 aa).

It belongs to the universal ribosomal protein uL30 family. In terms of assembly, part of the 50S ribosomal subunit.

The chain is Large ribosomal subunit protein uL30 from Methylococcus capsulatus (strain ATCC 33009 / NCIMB 11132 / Bath).